Reading from the N-terminus, the 515-residue chain is Signal transduction histidine-protein kinase/phosphatase MprB (515 aa).

The Cytoplasmic portion of the chain corresponds to 1 to 24 (MTLPPQPSRLKPPRNTSSLSLRWR). A helical transmembrane segment spans residues 25–45 (VMLLAMSMVAMVVVLMSVAVY). Residues 46–165 (AVVSRALYDD…TGQVLGRLGT (120 aa)) are Extracellular-facing. Residues 166–186 (VLLIVGGVGVAVAAIAGGMVA) form a helical membrane-spanning segment. Positions 187–239 (RAGLRPVGRLTQAAERVARTDDLRPIPVFGSDELARLTEAFNMMLRALTESRE) constitute an HAMP domain. Topologically, residues 187-515 (RAGLRPVGRL…GKSRSASKEL (329 aa)) are cytoplasmic. The Histidine kinase domain maps to 247-467 (DAGHELRTPL…SFYVMLPGRP (221 aa)). A Phosphohistidine; by autocatalysis modification is found at His-250. Positions 468–515 (LTPGGNGTAPVPAAQFDPDMRSAGSRADRRVIKNTETNGKSRSASKEL) are disordered.

Mg(2+) serves as cofactor. Mn(2+) is required as a cofactor. In terms of processing, autophosphorylated.

The protein resides in the cell membrane. It catalyses the reaction ATP + protein L-histidine = ADP + protein N-phospho-L-histidine.. In terms of biological role, member of the two-component regulatory system MprB/MprA which contributes to maintaining a balance among several systems involved in stress resistance and is required for establishment and maintenance of persistent infection in the host. In response to environmental signals MprB acts both as a membrane-associated protein kinase that undergoes autophosphorylation and subsequently transfers the phosphate to MprA, and a protein phosphatase that dephosphorylates phospho-MprA. This Mycobacterium sp. (strain JLS) protein is Signal transduction histidine-protein kinase/phosphatase MprB (mprB).